The following is a 177-amino-acid chain: NAD(P)H-quinone oxidoreductase subunit 6, chloroplastic (177 aa).

5 helical membrane passes run 10–30, 32–52, 61–81, 93–115, and 152–172; these read ILLV…VLLT, PIYS…FHIL, AQLL…VMFM, WTVG…IATI, and FFLP…GAIA.

The protein belongs to the complex I subunit 6 family. As to quaternary structure, NDH is composed of at least 16 different subunits, 5 of which are encoded in the nucleus.

Its subcellular location is the plastid. It localises to the chloroplast thylakoid membrane. The catalysed reaction is a plastoquinone + NADH + (n+1) H(+)(in) = a plastoquinol + NAD(+) + n H(+)(out). It carries out the reaction a plastoquinone + NADPH + (n+1) H(+)(in) = a plastoquinol + NADP(+) + n H(+)(out). In terms of biological role, NDH shuttles electrons from NAD(P)H:plastoquinone, via FMN and iron-sulfur (Fe-S) centers, to quinones in the photosynthetic chain and possibly in a chloroplast respiratory chain. The immediate electron acceptor for the enzyme in this species is believed to be plastoquinone. Couples the redox reaction to proton translocation, and thus conserves the redox energy in a proton gradient. The sequence is that of NAD(P)H-quinone oxidoreductase subunit 6, chloroplastic (ndhG) from Amborella trichopoda.